We begin with the raw amino-acid sequence, 620 residues long: DNA mismatch repair protein MutL (620 aa).

The interval 332–402 (SELGLEAQPE…YRTPLRPATH (71 aa)) is disordered. Low complexity predominate over residues 352–365 (SNSTNSNVSSTSYS). Residues 378–394 (PLTTTATSYNQGQSSYR) show a composition bias toward polar residues.

The protein belongs to the DNA mismatch repair MutL/HexB family.

Its function is as follows. This protein is involved in the repair of mismatches in DNA. It is required for dam-dependent methyl-directed DNA mismatch repair. May act as a 'molecular matchmaker', a protein that promotes the formation of a stable complex between two or more DNA-binding proteins in an ATP-dependent manner without itself being part of a final effector complex. The sequence is that of DNA mismatch repair protein MutL from Shewanella piezotolerans (strain WP3 / JCM 13877).